Consider the following 389-residue polypeptide: UDP-N-acetylglucosamine--N-acetylmuramyl-(pentapeptide) pyrophosphoryl-undecaprenol N-acetylglucosamine transferase (389 aa).

UDP-N-acetyl-alpha-D-glucosamine contacts are provided by residues 17–19 (TAG), Asn137, Arg179, Ser213, and Gln308.

This sequence belongs to the glycosyltransferase 28 family. MurG subfamily.

The protein localises to the cell membrane. The catalysed reaction is di-trans,octa-cis-undecaprenyl diphospho-N-acetyl-alpha-D-muramoyl-L-alanyl-D-glutamyl-meso-2,6-diaminopimeloyl-D-alanyl-D-alanine + UDP-N-acetyl-alpha-D-glucosamine = di-trans,octa-cis-undecaprenyl diphospho-[N-acetyl-alpha-D-glucosaminyl-(1-&gt;4)]-N-acetyl-alpha-D-muramoyl-L-alanyl-D-glutamyl-meso-2,6-diaminopimeloyl-D-alanyl-D-alanine + UDP + H(+). It participates in cell wall biogenesis; peptidoglycan biosynthesis. In terms of biological role, cell wall formation. Catalyzes the transfer of a GlcNAc subunit on undecaprenyl-pyrophosphoryl-MurNAc-pentapeptide (lipid intermediate I) to form undecaprenyl-pyrophosphoryl-MurNAc-(pentapeptide)GlcNAc (lipid intermediate II). The chain is UDP-N-acetylglucosamine--N-acetylmuramyl-(pentapeptide) pyrophosphoryl-undecaprenol N-acetylglucosamine transferase from Rhodococcus erythropolis (strain PR4 / NBRC 100887).